The following is a 267-amino-acid chain: NAD kinase 2 (267 aa).

Catalysis depends on D52, which acts as the Proton acceptor. Residues 52-53 (DA), 124-125 (NE), R151, D153, 164-169 (TAYNKS), and A188 contribute to the NAD(+) site.

The protein belongs to the NAD kinase family. A divalent metal cation serves as cofactor.

The protein resides in the cytoplasm. It catalyses the reaction NAD(+) + ATP = ADP + NADP(+) + H(+). Involved in the regulation of the intracellular balance of NAD and NADP, and is a key enzyme in the biosynthesis of NADP. Catalyzes specifically the phosphorylation on 2'-hydroxyl of the adenosine moiety of NAD to yield NADP. The protein is NAD kinase 2 of Bacillus cereus (strain ATCC 10987 / NRS 248).